Consider the following 97-residue polypeptide: Co-chaperonin GroES (97 aa).

Belongs to the GroES chaperonin family. In terms of assembly, heptamer of 7 subunits arranged in a ring. Interacts with the chaperonin GroEL.

It localises to the cytoplasm. In terms of biological role, together with the chaperonin GroEL, plays an essential role in assisting protein folding. The GroEL-GroES system forms a nano-cage that allows encapsulation of the non-native substrate proteins and provides a physical environment optimized to promote and accelerate protein folding. GroES binds to the apical surface of the GroEL ring, thereby capping the opening of the GroEL channel. The chain is Co-chaperonin GroES from Pseudomonas putida (Arthrobacter siderocapsulatus).